The sequence spans 247 residues: 1-(5-phosphoribosyl)-5-[(5-phosphoribosylamino)methylideneamino] imidazole-4-carboxamide isomerase (247 aa).

D8 serves as the catalytic Proton acceptor. D130 acts as the Proton donor in catalysis.

The protein belongs to the HisA/HisF family.

Its subcellular location is the cytoplasm. It carries out the reaction 1-(5-phospho-beta-D-ribosyl)-5-[(5-phospho-beta-D-ribosylamino)methylideneamino]imidazole-4-carboxamide = 5-[(5-phospho-1-deoxy-D-ribulos-1-ylimino)methylamino]-1-(5-phospho-beta-D-ribosyl)imidazole-4-carboxamide. It functions in the pathway amino-acid biosynthesis; L-histidine biosynthesis; L-histidine from 5-phospho-alpha-D-ribose 1-diphosphate: step 4/9. The polypeptide is 1-(5-phosphoribosyl)-5-[(5-phosphoribosylamino)methylideneamino] imidazole-4-carboxamide isomerase (Stutzerimonas stutzeri (strain A1501) (Pseudomonas stutzeri)).